Reading from the N-terminus, the 111-residue chain is NADH-ubiquinone oxidoreductase chain 4 (111 aa).

Residues 35 to 55 (LITSLFSWLDITVFLTGLSAF) traverse the membrane as a helical segment.

Belongs to the complex I subunit 4 family.

The protein localises to the mitochondrion membrane. It carries out the reaction a ubiquinone + NADH + 5 H(+)(in) = a ubiquinol + NAD(+) + 4 H(+)(out). Its function is as follows. Core subunit of the mitochondrial membrane respiratory chain NADH dehydrogenase (Complex I) that is believed to belong to the minimal assembly required for catalysis. Complex I functions in the transfer of electrons from NADH to the respiratory chain. The immediate electron acceptor for the enzyme is believed to be ubiquinone. This chain is NADH-ubiquinone oxidoreductase chain 4 (MT-ND4), found in Caiman crocodilus (Spectacled caiman).